The sequence spans 2221 residues: RNA-directed RNA polymerase L (2221 aa).

The tract at residues 29 to 292 (KTVLLSQVNF…SERETLIEAE (264 aa)) is endonuclease. Mn(2+)-binding residues include Glu54, Asp91, and Glu104. The active site involves Lys117. The region spanning 1171–1369 (LDMKSVVRLS…YLSSKLNKFI (199 aa)) is the RdRp catalytic domain. Residue Asp1327 coordinates Mg(2+).

It belongs to the Bunyavirales RNA polymerase family. In terms of assembly, homomultimer; the oligomeric structure is essential for the polymerase activity. Interacts with nucleoprotein N. Interacts with protein Z; this interaction inhibits viral transcription and replication, Z partially blocks the product exit tunnel for the releasing nascent RNA product. Mn(2+) is required as a cofactor. It depends on Mg(2+) as a cofactor.

It localises to the virion. The protein localises to the host cytoplasm. The enzyme catalyses RNA(n) + a ribonucleoside 5'-triphosphate = RNA(n+1) + diphosphate. RNA-dependent RNA polymerase, which is responsible for the replication and transcription of the viral RNA genome using antigenomic RNA as an intermediate. During transcription, synthesizes subgenomic RNAs and assures their capping by a cap-snatching mechanism, which involves the endonuclease activity cleaving the host capped pre-mRNAs. These short capped RNAs are then used as primers for viral transcription. The 3'-end of subgenomic mRNAs molecules are heterogeneous and not polyadenylated. The replicase function is to direct synthesis of antigenomic and genomic RNA which are encapsidated and non capped. As a consequence of the use of the same enzyme for both transcription and replication, these mechanisms need to be well coordinated. These processes may be regulated by proteins N and Z in a dose-dependent manner. Z protein inhibits the viral polymerase L und thus the viral transcription and RNA synthesis. This is RNA-directed RNA polymerase L from Sigmodon hispidus (Hispid cotton rat).